Reading from the N-terminus, the 170-residue chain is Putative apoptosis inhibitor ORF87 (170 aa).

BIR repeat units lie at residues 22 to 92 (RIKS…PVGK) and 104 to 169 (RLKS…KLSS).

Functionally, may act as an apoptosis inhibitor. The sequence is that of Putative apoptosis inhibitor ORF87 from Ostreid herpesvirus 1 (isolate France) (OsHV-1).